The following is a 307-amino-acid chain: HPr kinase/phosphorylase (307 aa).

Residues H136 and K157 contribute to the active site. 151–158 is an ATP binding site; that stretch reads GESGIGKS. S158 contacts Mg(2+). The active-site Proton acceptor; for phosphorylation activity. Proton donor; for dephosphorylation activity is D175. The important for the catalytic mechanism of both phosphorylation and dephosphorylation stretch occupies residues 198 to 207; that stretch reads LEVRGMGIID. E199 is a binding site for Mg(2+). Residue R240 is part of the active site. The important for the catalytic mechanism of dephosphorylation stretch occupies residues 261–266; sequence PIRPGR.

Belongs to the HPrK/P family. Homohexamer. It depends on Mg(2+) as a cofactor.

The catalysed reaction is [HPr protein]-L-serine + ATP = [HPr protein]-O-phospho-L-serine + ADP + H(+). The enzyme catalyses [HPr protein]-O-phospho-L-serine + phosphate + H(+) = [HPr protein]-L-serine + diphosphate. Functionally, catalyzes the ATP- as well as the pyrophosphate-dependent phosphorylation of a specific serine residue in HPr, a phosphocarrier protein of the phosphoenolpyruvate-dependent sugar phosphotransferase system (PTS). HprK/P also catalyzes the pyrophosphate-producing, inorganic phosphate-dependent dephosphorylation (phosphorolysis) of seryl-phosphorylated HPr (P-Ser-HPr). The two antagonistic activities of HprK/P are regulated by several intracellular metabolites, which change their concentration in response to the absence or presence of rapidly metabolisable carbon sources (glucose, fructose, etc.) in the growth medium. Therefore, by controlling the phosphorylation state of HPr, HPrK/P is a sensor enzyme that plays a major role in the regulation of carbon metabolism and sugar transport: it mediates carbon catabolite repression (CCR), and regulates PTS-catalyzed carbohydrate uptake and inducer exclusion. This chain is HPr kinase/phosphorylase, found in Clostridium novyi (strain NT).